Reading from the N-terminus, the 156-residue chain is Large ribosomal subunit protein uL22c (156 aa).

This sequence belongs to the universal ribosomal protein uL22 family. As to quaternary structure, part of the 50S ribosomal subunit.

Its subcellular location is the plastid. It is found in the chloroplast. Functionally, this protein binds specifically to 23S rRNA. In terms of biological role, the globular domain of the protein is located near the polypeptide exit tunnel on the outside of the subunit, while an extended beta-hairpin is found that lines the wall of the exit tunnel in the center of the 70S ribosome. The sequence is that of Large ribosomal subunit protein uL22c (rpl22) from Buxus microphylla (Littleleaf boxwood).